Consider the following 571-residue polypeptide: Septation ring formation regulator EzrA (571 aa).

The Extracellular portion of the chain corresponds to 1–3; that stretch reads MYY. The chain crosses the membrane as a helical span at residues 4 to 22; it reads MLIGFIIVVIAIISAGYIL. Topologically, residues 23 to 571 are cytoplasmic; it reads KRKHYQRINE…ESKVSVDDIE (549 aa). Coiled-coil stretches lie at residues 169-214, 249-298, 326-374, 400-438, and 474-529; these read VETK…AQME, AQME…DTLE, DALA…ASGE, KFAE…RERL, and TQDW…ENHF.

Belongs to the EzrA family.

It is found in the cell membrane. Negative regulator of FtsZ ring formation; modulates the frequency and position of FtsZ ring formation. Inhibits FtsZ ring formation at polar sites. Interacts either with FtsZ or with one of its binding partners to promote depolymerization. The chain is Septation ring formation regulator EzrA from Listeria welshimeri serovar 6b (strain ATCC 35897 / DSM 20650 / CCUG 15529 / CIP 8149 / NCTC 11857 / SLCC 5334 / V8).